The chain runs to 193 residues: Large ribosomal subunit protein uL5 (193 aa).

Belongs to the universal ribosomal protein uL5 family. As to quaternary structure, part of the 50S ribosomal subunit; part of the 5S rRNA/L5/L18/L25 subcomplex. Contacts the 5S rRNA and the P site tRNA. Forms a bridge to the 30S subunit in the 70S ribosome.

Functionally, this is one of the proteins that bind and probably mediate the attachment of the 5S RNA into the large ribosomal subunit, where it forms part of the central protuberance. In the 70S ribosome it contacts protein S13 of the 30S subunit (bridge B1b), connecting the 2 subunits; this bridge is implicated in subunit movement. Contacts the P site tRNA; the 5S rRNA and some of its associated proteins might help stabilize positioning of ribosome-bound tRNAs. In Pseudarthrobacter chlorophenolicus (strain ATCC 700700 / DSM 12829 / CIP 107037 / JCM 12360 / KCTC 9906 / NCIMB 13794 / A6) (Arthrobacter chlorophenolicus), this protein is Large ribosomal subunit protein uL5.